A 186-amino-acid polypeptide reads, in one-letter code: MTLLVGLGNPTLRYAHTRHNAGFDILDSLVSELNLSFAFSPKHNAYLCVYKDFILLKPQTYMNLSGESVLSAKNFYKTKELLIVHDDLDLPLGVVRFKKGGGNGGHNGLKSIDLLCSNSYYRLRVGISKGIGVIEHVLSKFHKNEEPLKNAVFEHAKNALKFFIESHDFNAMQNRFTLKKPLQIES.

Residue Y14 participates in tRNA binding. H19 serves as the catalytic Proton acceptor. TRNA-binding residues include Y61, N63, and N107.

Belongs to the PTH family. In terms of assembly, monomer.

The protein resides in the cytoplasm. The enzyme catalyses an N-acyl-L-alpha-aminoacyl-tRNA + H2O = an N-acyl-L-amino acid + a tRNA + H(+). Functionally, hydrolyzes ribosome-free peptidyl-tRNAs (with 1 or more amino acids incorporated), which drop off the ribosome during protein synthesis, or as a result of ribosome stalling. Its function is as follows. Catalyzes the release of premature peptidyl moieties from peptidyl-tRNA molecules trapped in stalled 50S ribosomal subunits, and thus maintains levels of free tRNAs and 50S ribosomes. This Helicobacter pylori (strain G27) protein is Peptidyl-tRNA hydrolase.